We begin with the raw amino-acid sequence, 415 residues long: Probable RAD2-like endonuclease 369L (415 aa).

Residues 1–114 are N-domain; sequence MGIKNLTKFI…EDVKKKTLSL (114 aa). Asp-34, Glu-86, Glu-198, Glu-200, Asp-219, Asp-221, and Asp-277 together coordinate Mg(2+). An I-domain region spans residues 163–297; that stretch reads VKQRHRYDIR…VKSYELIKVQ (135 aa).

The protein belongs to the XPG/RAD2 endonuclease family. Mg(2+) serves as cofactor.

The protein localises to the host nucleus. Probable endonuclease. The sequence is that of Probable RAD2-like endonuclease 369L from Acheta domesticus (House cricket).